Reading from the N-terminus, the 187-residue chain is F-box protein At5g41720 (187 aa).

The region spanning 2 to 49 (MMNSPLDYDVLLEIMSYCPATEMAKFRLLSKECNKRSYEMSFINRHLH) is the F-box domain.

The sequence is that of F-box protein At5g41720 from Arabidopsis thaliana (Mouse-ear cress).